The following is a 235-amino-acid chain: LexA repressor (235 aa).

A DNA-binding region (H-T-H motif) is located at residues 26–46 (FDEMKEALDLASKSGIHRLIT). A disordered region spans residues 72-104 (QATTAAPPKGRGAFRPQVLEGGGQAPTTSAQPQ). Catalysis depends on for autocatalytic cleavage activity residues Ser-156 and Lys-193.

The protein belongs to the peptidase S24 family. Homodimer.

It carries out the reaction Hydrolysis of Ala-|-Gly bond in repressor LexA.. In terms of biological role, represses a number of genes involved in the response to DNA damage (SOS response), including recA and lexA. In the presence of single-stranded DNA, RecA interacts with LexA causing an autocatalytic cleavage which disrupts the DNA-binding part of LexA, leading to derepression of the SOS regulon and eventually DNA repair. This chain is LexA repressor, found in Caulobacter sp. (strain K31).